A 678-amino-acid chain; its full sequence is MGGIKKFKKGEKGENLKFITRNEAVKKLQISLKIFRKLCILKGIHPRDPKKKFKGKHKTYYYSKDIKYLQNEKVLEIIRARKVFKDREKKLINKKQFGALKNLKENRPMITLDHIIKERYPTFQDALKDLDDCLSLIHLFANMDASAKVRENQILACERLAREFQYYIIQSKSLRKVFVSVKGVYYQADVMGETITWITPLNYLSKKEKEVDYGVMISFLEFYQALMKFVNYRLFTSIGLTYPPTIDDAKLRKCDSLINIFESKPQQQTKTNNTTKKSKSTTAAAAATTPVDPKLKKLEEKISKINSKEEKEIKEQIVEEDTNMLQVNSSGISKDFEDLVGNESDNIPKIMDVTTLFKGFHFYISREVPRHMLEFVILSFGGRVSFPGSGDKVKEVNQSITHQIVDRSNSVKVHNTREYIQPQWVFDSVNSKLLLPYSEYTIGVIPPAHLSPFVEYEEDSYIPARKQALDALINSKEFADAKINTNAEQDDDNDNDNDNRKQVDSDGESDDEDDEDLEHLETRYTEELRKEQSKKRKSSEVDDDDEEEEDGEEDGEEEEEEEDGEEESESESESEQVAKPVLTKKQRDELNKQKQAEEDTKLAELMIRKKDKWIYNKVKETNQQRATANQTLLEKRNKVESGKDVNGNVKVAPQPKKPAPLVKKSQQKQQQASKKQKK.

The segment at P265–T289 is disordered. Positions T269 to T289 are enriched in low complexity. Residues D352–I442 enclose the BRCT domain. Disordered stretches follow at residues T485–K601 and A626–K678. A compositionally biased stretch (acidic residues) spans S505–E518. A compositionally biased stretch (basic and acidic residues) spans H519–E531. Acidic residues predominate over residues V541 to S574. A coiled-coil region spans residues V581–E640. 2 stretches are compositionally biased toward basic and acidic residues: residues K585–K601 and L633–K643. A compositionally biased stretch (low complexity) spans V649–K678.

It belongs to the pescadillo family.

It localises to the nucleus. The protein localises to the nucleolus. It is found in the nucleoplasm. In terms of biological role, required for maturation of ribosomal RNAs and formation of the large ribosomal subunit. This Dictyostelium discoideum (Social amoeba) protein is Pescadillo homolog.